The sequence spans 242 residues: MAPK-interacting and spindle-stabilizing protein-like (242 aa).

2 disordered regions span residues 1–145 and 192–242; these read MSDE…SLGP and PPGA…HSYH. Serine 2 bears the N-acetylserine mark. A phosphoserine mark is found at serine 2, serine 6, and serine 15. Positions 13-29 are enriched in polar residues; it reads EQSSAKPPAVTNTKAGH. Over residues 30-43 the composition is skewed to low complexity; it reads SSQGWPGSSPWSNP. Pro residues-rich tracts occupy residues 44–53 and 75–114; these read SAPPAMPSGL and SMPPTGPPPGPPGPFPPPGPSCPPPGVPYPAPAVPGPGPT. A compositionally biased stretch (low complexity) spans 192–210; sequence PPGAWGPAAPYPGPAGSYP.

It belongs to the MISS family.

This chain is MAPK-interacting and spindle-stabilizing protein-like (Mapk1ip1l), found in Mus musculus (Mouse).